A 524-amino-acid polypeptide reads, in one-letter code: Solute carrier family 40 member 1 (524 aa).

Positions 1–18 (MENETELRVVHQEEQQRE) are enriched in basic and acidic residues. Positions 1–30 (MENETELRVVHQEEQQREEGEDESQPQNPP) are disordered. Transmembrane regions (helical) follow at residues 70-92 (SLLL…GPIV), 109-129 (LLFQ…LLLV), 137-157 (LPVF…GVLS), 191-211 (GIDL…ISFV), 218-238 (ITFA…FISV), 314-334 (VVLP…FGTL), 347-367 (YIIG…TLVY), 380-400 (GLWS…SIWV), 409-429 (MLMA…LAVI), 446-466 (GVQN…GIIV), and 472-492 (FWIL…LYTI).

It belongs to the ferroportin (FP) (TC 2.A.100) family. SLC40A subfamily.

The protein localises to the membrane. May be involved in iron transport and iron homeostasis. This is Solute carrier family 40 member 1 (IREG1) from Arabidopsis thaliana (Mouse-ear cress).